We begin with the raw amino-acid sequence, 216 residues long: Urease accessory protein UreG (216 aa).

G25 to T32 lines the GTP pocket.

Belongs to the SIMIBI class G3E GTPase family. UreG subfamily. Homodimer. UreD, UreF and UreG form a complex that acts as a GTP-hydrolysis-dependent molecular chaperone, activating the urease apoprotein by helping to assemble the nickel containing metallocenter of UreC. The UreE protein probably delivers the nickel.

The protein resides in the cytoplasm. In terms of biological role, facilitates the functional incorporation of the urease nickel metallocenter. This process requires GTP hydrolysis, probably effectuated by UreG. This chain is Urease accessory protein UreG, found in Burkholderia mallei (strain NCTC 10247).